The following is a 162-amino-acid chain: Early E1A 18 kDa protein (162 aa).

Positions 134–162 (EEPTEGVAENSLKRQADSSLCSSSPKRFC) are disordered. The segment covering 150 to 162 (DSSLCSSSPKRFC) has biased composition (polar residues).

The sequence is that of Early E1A 18 kDa protein from Tree shrew adenovirus serotype 1 (TSAdV-1).